The primary structure comprises 207 residues: Large ribosomal subunit protein uL4 (207 aa).

Residues 49 to 78 form a disordered region; the sequence is HAVKNRSAVSGGGRKPWRQKGTGRARQGSI.

The protein belongs to the universal ribosomal protein uL4 family. Part of the 50S ribosomal subunit.

Functionally, one of the primary rRNA binding proteins, this protein initially binds near the 5'-end of the 23S rRNA. It is important during the early stages of 50S assembly. It makes multiple contacts with different domains of the 23S rRNA in the assembled 50S subunit and ribosome. In terms of biological role, forms part of the polypeptide exit tunnel. The sequence is that of Large ribosomal subunit protein uL4 (rplD) from Streptococcus pyogenes serotype M1.